The following is a 169-amino-acid chain: Lipoprotein signal peptidase (169 aa).

4 helical membrane passes run 15–35 (WLWLAIVIFLADIGIKYVVMN), 47–67 (ILPFFNLLYVHNYGAAFSFLS), 75–95 (WLFTGIAFVVTGLLTYWMSKL), and 107–127 (AMIIGGAVGNVFDRVIHGFVV). Residues Asp128 and Asp146 contribute to the active site. Residues 141–161 (AFNLADMAICLGAAMIILDGF) form a helical membrane-spanning segment.

This sequence belongs to the peptidase A8 family.

It localises to the cell inner membrane. The enzyme catalyses Release of signal peptides from bacterial membrane prolipoproteins. Hydrolyzes -Xaa-Yaa-Zaa-|-(S,diacylglyceryl)Cys-, in which Xaa is hydrophobic (preferably Leu), and Yaa (Ala or Ser) and Zaa (Gly or Ala) have small, neutral side chains.. It functions in the pathway protein modification; lipoprotein biosynthesis (signal peptide cleavage). In terms of biological role, this protein specifically catalyzes the removal of signal peptides from prolipoproteins. In Vibrio parahaemolyticus serotype O3:K6 (strain RIMD 2210633), this protein is Lipoprotein signal peptidase.